A 490-amino-acid chain; its full sequence is Cytochrome P450 2C25 (490 aa).

Cys435 is a heme binding site.

The protein belongs to the cytochrome P450 family. It depends on heme as a cofactor.

The protein resides in the endoplasmic reticulum membrane. The protein localises to the microsome membrane. It carries out the reaction an organic molecule + reduced [NADPH--hemoprotein reductase] + O2 = an alcohol + oxidized [NADPH--hemoprotein reductase] + H2O + H(+). In terms of biological role, catalyzes the hydroxylation of tolbutamide and the N-demethylation of aminopyrine and benzphetamine. Also has testosterone hydroxylase (16 beta) activity. The protein is Cytochrome P450 2C25 (CYP2C25) of Mesocricetus auratus (Golden hamster).